A 351-amino-acid chain; its full sequence is Photosystem II D2 protein (351 aa).

The chain crosses the membrane as a helical span at residues 39–59 (TAYLAIGGWLTGTTFVTSWYT). Position 116 (H116) interacts with chlorophyll a. A helical transmembrane segment spans residues 123–139 (GFMLRQFELARLIGIRP). Pheophytin a is bound by residues Q128 and N141. Residues 151 to 164 (VFVSVFLIYPLGQS) traverse the membrane as a helical segment. H196 is a chlorophyll a binding site. Residues 206 to 226 (GALLSAIHGVTVENTLYQDGE) form a helical membrane-spanning segment. Positions 213 and 260 each coordinate a plastoquinone. Position 213 (H213) interacts with Fe cation. H267 provides a ligand contact to Fe cation. A helical membrane pass occupies residues 277-293 (GLWTSSIGIIGLALNLR).

The protein belongs to the reaction center PufL/M/PsbA/D family. In terms of assembly, PSII is composed of 1 copy each of membrane proteins PsbA, PsbB, PsbC, PsbD, PsbE, PsbF, PsbH, PsbI, PsbJ, PsbK, PsbL, PsbM, PsbT, PsbX, PsbY, PsbZ, Psb30/Ycf12, peripheral proteins PsbO, CyanoQ (PsbQ), PsbU, PsbV and a large number of cofactors. It forms dimeric complexes. Requires The D1/D2 heterodimer binds P680, chlorophylls that are the primary electron donor of PSII, and subsequent electron acceptors. It shares a non-heme iron and each subunit binds pheophytin, quinone, additional chlorophylls, carotenoids and lipids. There is also a Cl(-1) ion associated with D1 and D2, which is required for oxygen evolution. The PSII complex binds additional chlorophylls, carotenoids and specific lipids. as cofactor.

The protein localises to the host cellular thylakoid membrane. The catalysed reaction is 2 a plastoquinone + 4 hnu + 2 H2O = 2 a plastoquinol + O2. Functionally, photosystem II (PSII) is a light-driven water:plastoquinone oxidoreductase that uses light energy to abstract electrons from H(2)O, generating O(2) and a proton gradient subsequently used for ATP formation. It consists of a core antenna complex that captures photons, and an electron transfer chain that converts photonic excitation into a charge separation. The D1/D2 (PsbA/PsbD) reaction center heterodimer binds P680, the primary electron donor of PSII as well as several subsequent electron acceptors. D2 is needed for assembly of a stable PSII complex. The polypeptide is Photosystem II D2 protein (psbD) (Synechococcus phage S-RSM2).